Here is a 316-residue protein sequence, read N- to C-terminus: Beta-ketoacyl-[acyl-carrier-protein] synthase III (316 aa).

Residues C112 and H243 contribute to the active site. The interval 244-248 is ACP-binding; sequence QANLR. N273 is a catalytic residue.

The protein belongs to the thiolase-like superfamily. FabH family. In terms of assembly, homodimer.

The protein resides in the cytoplasm. The catalysed reaction is malonyl-[ACP] + acetyl-CoA + H(+) = 3-oxobutanoyl-[ACP] + CO2 + CoA. It participates in lipid metabolism; fatty acid biosynthesis. Functionally, catalyzes the condensation reaction of fatty acid synthesis by the addition to an acyl acceptor of two carbons from malonyl-ACP. Catalyzes the first condensation reaction which initiates fatty acid synthesis and may therefore play a role in governing the total rate of fatty acid production. Possesses both acetoacetyl-ACP synthase and acetyl transacylase activities. Its substrate specificity determines the biosynthesis of branched-chain and/or straight-chain of fatty acids. The sequence is that of Beta-ketoacyl-[acyl-carrier-protein] synthase III from Yersinia pestis (strain Pestoides F).